The chain runs to 468 residues: Cytochrome P450-like protein L532 (468 aa).

2 consecutive transmembrane segments (helical) span residues 22–42 and 172–192; these read WFAY…FGLI and VTVL…GVDV. C415 is a heme binding site.

It belongs to the cytochrome P450 family. The cofactor is heme.

The protein localises to the host membrane. It is found in the virion. The sequence is that of Cytochrome P450-like protein L532 from Acanthamoeba polyphaga mimivirus (APMV).